A 182-amino-acid chain; its full sequence is UPF0301 protein NGK_1355 (182 aa).

This sequence belongs to the UPF0301 (AlgH) family.

This Neisseria gonorrhoeae (strain NCCP11945) protein is UPF0301 protein NGK_1355.